Consider the following 158-residue polypeptide: Phosphopantetheine adenylyltransferase (158 aa).

T10 serves as a coordination point for substrate. ATP is bound by residues 10–11 (TF) and H18. Residues K42, L74, and R88 each coordinate substrate. ATP-binding positions include 89–91 (GIR), E99, and 124–130 (WRYLSST).

It belongs to the bacterial CoaD family. As to quaternary structure, homohexamer. Mg(2+) is required as a cofactor.

It is found in the cytoplasm. It carries out the reaction (R)-4'-phosphopantetheine + ATP + H(+) = 3'-dephospho-CoA + diphosphate. The protein operates within cofactor biosynthesis; coenzyme A biosynthesis; CoA from (R)-pantothenate: step 4/5. Functionally, reversibly transfers an adenylyl group from ATP to 4'-phosphopantetheine, yielding dephospho-CoA (dPCoA) and pyrophosphate. The sequence is that of Phosphopantetheine adenylyltransferase from Actinobacillus pleuropneumoniae serotype 5b (strain L20).